The primary structure comprises 100 residues: Large ribosomal subunit protein uL23 (100 aa).

It belongs to the universal ribosomal protein uL23 family. Part of the 50S ribosomal subunit. Contacts protein L29, and trigger factor when it is bound to the ribosome.

In terms of biological role, one of the early assembly proteins it binds 23S rRNA. One of the proteins that surrounds the polypeptide exit tunnel on the outside of the ribosome. Forms the main docking site for trigger factor binding to the ribosome. The sequence is that of Large ribosomal subunit protein uL23 from Prochlorococcus marinus (strain MIT 9313).